Consider the following 397-residue polypeptide: Phosphoribulokinase, chloroplastic (397 aa).

The N-terminal 44 residues, 1–44 (MAVSAYTVPTTSHLGFNQKKQLFFCNKSAYKRVSFSSRPCVITC), are a transit peptide targeting the chloroplast. A disulfide bridge links C62 with C101.

It belongs to the phosphoribulokinase family.

The protein localises to the plastid. Its subcellular location is the chloroplast. It carries out the reaction D-ribulose 5-phosphate + ATP = D-ribulose 1,5-bisphosphate + ADP + H(+). Its pathway is carbohydrate biosynthesis; Calvin cycle. With respect to regulation, light regulated via thioredoxin by reversible oxidation/reduction of sulfhydryl/disulfide groups. This chain is Phosphoribulokinase, chloroplastic, found in Mesembryanthemum crystallinum (Common ice plant).